The following is a 241-amino-acid chain: Phycocyanobilin:ferredoxin oxidoreductase (241 aa).

Belongs to the HY2 family.

It carries out the reaction (2R,3Z)-phycocyanobilin + 4 oxidized [2Fe-2S]-[ferredoxin] = biliverdin IXalpha + 4 reduced [2Fe-2S]-[ferredoxin] + 4 H(+). Functionally, catalyzes the four-electron reduction of biliverdin IX-alpha (2-electron reduction at both the A and D rings); the reaction proceeds via an isolatable 2-electron intermediate, 181,182-dihydrobiliverdin. The protein is Phycocyanobilin:ferredoxin oxidoreductase of Prochlorococcus marinus (strain MIT 9215).